The chain runs to 266 residues: Small ribosomal subunit protein eS1 (266 aa).

Positions 237 to 266 are disordered; it reads DGGSKTGEVGETGSKVDRPEGYEPPVQETV.

Belongs to the eukaryotic ribosomal protein eS1 family. In terms of assembly, component of the small ribosomal subunit. Mature ribosomes consist of a small (40S) and a large (60S) subunit. The 40S subunit contains about 33 different proteins and 1 molecule of RNA (18S). The 60S subunit contains about 49 different proteins and 3 molecules of RNA (28S, 5.8S and 5S).

It is found in the cytoplasm. The protein is Small ribosomal subunit protein eS1 of Lysiphlebus testaceipes (Greenbugs aphid parastoid).